The following is a 247-amino-acid chain: Peptidyl-prolyl cis-trans isomerase FKBP17-2, chloroplastic (247 aa).

A chloroplast-targeting transit peptide spans 1–79; it reads MANLFTATAP…SSLTRRFGIG (79 aa). The interval 26 to 64 is disordered; that stretch reads QCYASSSNPPEPESSSPPPPPPPPQPLASQQKRKKNVET. Positions 34 to 51 are enriched in pro residues; sequence PPEPESSSPPPPPPPPQP. The PPIase FKBP-type domain maps to 141–243; that stretch reads GDLVVIDLKG…EYIVEIDRVS (103 aa).

This sequence belongs to the FKBP-type PPIase family.

The protein localises to the plastid. It localises to the chloroplast thylakoid lumen. It carries out the reaction [protein]-peptidylproline (omega=180) = [protein]-peptidylproline (omega=0). Functionally, PPIases accelerate the folding of proteins. It catalyzes the cis-trans isomerization of proline imidic peptide bonds in oligopeptides. The polypeptide is Peptidyl-prolyl cis-trans isomerase FKBP17-2, chloroplastic (FKBP17-2) (Arabidopsis thaliana (Mouse-ear cress)).